The following is a 264-amino-acid chain: Phosphonoacetaldehyde hydrolase (264 aa).

Asp-9 serves as the catalytic Nucleophile. Residues Asp-9 and Ala-11 each contribute to the Mg(2+) site. Lys-50 (schiff-base intermediate with substrate) is an active-site residue. Asp-183 contacts Mg(2+).

The protein belongs to the HAD-like hydrolase superfamily. PhnX family. Homodimer. Mg(2+) is required as a cofactor.

It carries out the reaction phosphonoacetaldehyde + H2O = acetaldehyde + phosphate + H(+). Functionally, involved in phosphonate degradation. The polypeptide is Phosphonoacetaldehyde hydrolase (Bacillus anthracis).